The primary structure comprises 536 residues: Phosphoenolpyruvate carboxykinase (ATP) (536 aa).

Arginine 61, tyrosine 195, and lysine 201 together coordinate substrate. ATP-binding positions include lysine 201, histidine 220, and 236 to 244 (GLSGTGKTT). Mn(2+) is bound by residues lysine 201 and histidine 220. Residue aspartate 257 coordinates Mn(2+). ATP contacts are provided by glutamate 285, arginine 322, and threonine 447. A substrate-binding site is contributed by arginine 322.

It belongs to the phosphoenolpyruvate carboxykinase (ATP) family. It depends on Mn(2+) as a cofactor.

The protein resides in the cytoplasm. It carries out the reaction oxaloacetate + ATP = phosphoenolpyruvate + ADP + CO2. Its pathway is carbohydrate biosynthesis; gluconeogenesis. Functionally, involved in the gluconeogenesis. Catalyzes the conversion of oxaloacetate (OAA) to phosphoenolpyruvate (PEP) through direct phosphoryl transfer between the nucleoside triphosphate and OAA. The sequence is that of Phosphoenolpyruvate carboxykinase (ATP) from Agrobacterium fabrum (strain C58 / ATCC 33970) (Agrobacterium tumefaciens (strain C58)).